Reading from the N-terminus, the 443-residue chain is Putative type II methyltransferase M.BsuMIIP (443 aa).

Positions 4 to 440 constitute an SAM-dependent MTase C5-type domain; that stretch reads LRVMSLFSGI…QELIHTYVNK (437 aa). Residue cysteine 78 is part of the active site.

The protein belongs to the class I-like SAM-binding methyltransferase superfamily. C5-methyltransferase family.

The enzyme catalyses a 2'-deoxycytidine in DNA + S-adenosyl-L-methionine = a 5-methyl-2'-deoxycytidine in DNA + S-adenosyl-L-homocysteine + H(+). Its function is as follows. A putative methylase, recognizes the double-stranded sequence 5'-GGCC-3', methylates C-?. There is no known cognate restriction enzyme. The protein is Putative type II methyltransferase M.BsuMIIP (mtbP) of Bacillus subtilis (strain 168).